Consider the following 260-residue polypeptide: Homeobox protein Hox-D11b (260 aa).

Low complexity predominate over residues 1–14; sequence MFSSSFSYPSKTSP. Disordered regions lie at residues 1 to 21 and 151 to 206; these read MFSS…PFLA and ITPG…CTRR. Positions 167–179 are enriched in basic and acidic residues; the sequence is RSPDGESSEERAG. The segment at residues 205 to 260 is a DNA-binding region (homeobox; truncated); the sequence is RRKKRCPYSKQQIIELEREFLFNIYINKDRRMQLSHLLRLTDRCVNNPLNQDSFFT.

Belongs to the Abd-B homeobox family.

Its subcellular location is the nucleus. In terms of biological role, sequence-specific transcription factor which is part of a developmental regulatory system that provides cells with specific positional identities on the anterior-posterior axis. This is Homeobox protein Hox-D11b (hoxd11b) from Takifugu rubripes (Japanese pufferfish).